The chain runs to 1067 residues: Probable importin-5 homolog (1067 aa).

HEAT repeat units lie at residues 3–34 (LQPI…YKNH), 42–75 (SFIV…SGNI), 93–120 (FAVR…QLVP), 125–152 (PEIL…LIGA), 164–197 (APHF…STFI), 206–243 (VFKP…IAQY), 251–286 (NFDM…FAEF), 295–347 (LYLE…HCVS), 349–381 (GLWE…SSIS), 385–425 (EKQI…ASYL), 427–466 (REMQ…LDEI), 468–508 (PNRV…VDGI), 510–553 (EEFT…GLAV), 555–596 (KKVF…AQCL), 598–658 (EDFI…AMEL), 661–703 (HLFP…SKQH), 718–757 (FTSR…MDIG), 763–826 (ADRI…CIQF), 832–869 (PYIA…ENGG), 876–909 (YPHI…AAEN), 917–960 (FLME…ITNL), 969–999 (PQTI…TLIR), 1008–1040 (QQYI…LALR), and 1041–1064 (SQES…LANF).

The protein belongs to the importin beta family. Importin beta-3 subfamily.

It localises to the cytoplasm. Its subcellular location is the nucleus. Functions in nuclear protein import as nuclear transport receptor. Serves as receptor for nuclear localization signals (NLS) in cargo substrates. In Dictyostelium discoideum (Social amoeba), this protein is Probable importin-5 homolog.